Consider the following 314-residue polypeptide: Acetaldehyde dehydrogenase 1 (314 aa).

15–18 (SGNI) is an NAD(+) binding site. The active-site Acyl-thioester intermediate is the cysteine 133. NAD(+) is bound by residues 164-172 (SAGPGTRAN) and asparagine 291.

It belongs to the acetaldehyde dehydrogenase family.

It carries out the reaction acetaldehyde + NAD(+) + CoA = acetyl-CoA + NADH + H(+). This is Acetaldehyde dehydrogenase 1 from Paraburkholderia xenovorans (strain LB400).